The sequence spans 35 residues: Potassium channel toxin alpha-KTx 6.1 (35 aa).

4 disulfide bridges follow: Cys-4/Cys-25, Cys-10/Cys-30, Cys-14/Cys-32, and Cys-20/Cys-35.

It belongs to the short scorpion toxin superfamily. Potassium channel inhibitor family. Alpha-KTx 06 subfamily. In terms of tissue distribution, expressed by the venom gland.

It is found in the secreted. Its function is as follows. Potently and reversibly inhibits the insect voltage-gated Shaker (Sh) potassium channel (isoform alpha (B)), the mammalian voltage-gated potassium channels Kv1.2/KCNA2 (IC(50)=0.44 nM), and the calcium-activated potassium channel KCa2.3/KCNN3 (Kd=330 nM). Its effect on Kv1.3/KCNA3 is controversial, since this channel is voltage-independently inhibited in PubMed:9464266, but is not affected in PubMed:10931199. Furthermore, this toxin competes with apamin (a small conductance calcium-activated potassium channel inhibitor) for binding to rat brain synaptosomes. This chain is Potassium channel toxin alpha-KTx 6.1, found in Pandinus imperator (Emperor scorpion).